The primary structure comprises 642 residues: Frizzled-1 (642 aa).

An N-terminal signal peptide occupies residues 1–68; the sequence is MAEEAAPSES…WLLEAPLLLG (68 aa). Disordered regions lie at residues 26–45 and 76–99; these read PGRREEVGHEDTASHRRPRA and QVSGPGQQAPPPPQPQQSGQQYNG. Residues 69 to 317 are Extracellular-facing; that stretch reads VRAQAAGQVS…PEELRFSRTW (249 aa). In terms of domain architecture, FZ spans 106–225; the sequence is PDHGYCQPIS…HGAGELCVGQ (120 aa). Disulfide bonds link Cys-111/Cys-172, Cys-119/Cys-165, Cys-156/Cys-193, Cys-182/Cys-222, and Cys-186/Cys-210. Asn-125 carries an N-linked (GlcNAc...) asparagine glycan. Asn-226 carries N-linked (GlcNAc...) asparagine glycosylation. A helical transmembrane segment spans residues 318–338; it reads IGIWSVLCCASTLFTVLTYLV. Over 339–349 the chain is Cytoplasmic; it reads DMRRFSYPERP. The helical transmembrane segment at 350–370 threads the bilayer; it reads IIFLSGCYTAVAVAYIAGFLL. Topologically, residues 371–397 are extracellular; sequence EDRVVCNDKFAEDGARTVAQGTKKEGC. A helical membrane pass occupies residues 398–418; sequence TILFMMLYFFSMASSIWWVIL. The Cytoplasmic segment spans residues 419 to 440; it reads SLTWFLAAGMKWGHEAIEANSQ. A helical transmembrane segment spans residues 441 to 461; it reads YFHLAAWAVPAIKTITILALG. Over 462–484 the chain is Extracellular; it reads QVDGDVLSGVCFVGLNNVDALRG. The chain crosses the membrane as a helical span at residues 485-505; the sequence is FVLAPLFVYLFIGTSFLLAGF. Over 506-531 the chain is Cytoplasmic; sequence VSLFRIRTIMKHDGTKTEKLEKLMVR. Residues 532 to 552 form a helical membrane-spanning segment; it reads IGVFSVLYTVPATIVIACYFY. The Extracellular portion of the chain corresponds to 553-593; that stretch reads EQAFRDQWERSWVAQSCKSYAIPCPHLQGGGGVPPHPPMSP. The chain crosses the membrane as a helical span at residues 594–614; the sequence is DFTVFMIKYLMTLIVGITSGF. Residues 615–642 are Cytoplasmic-facing; it reads WIWSGKTLNSWRKFYTRLTNSKQGETTV. Positions 620-625 match the Lys-Thr-X-X-X-Trp motif, mediates interaction with the PDZ domain of Dvl family members motif; the sequence is KTLNSW. Residues 640-642 carry the PDZ-binding motif; that stretch reads TTV.

This sequence belongs to the G-protein coupled receptor Fz/Smo family. Interacts with MYOC. Interacts with WNT7B. Ubiquitinated by ZNRF3, leading to its degradation by the proteasome. Expressed in chondrocytes.

The protein resides in the cell membrane. Its function is as follows. Receptor for Wnt proteins. Activated by WNT7B. Activated by WNT3A, WNT3, WNT1 and to a lesser extent WNT2, but apparently not by WNT4, WNT5A, WNT5B, WNT6, WNT7A or WNT7B. Contradictory results showing activation by WNT7B have been described for mouse. Functions in the canonical Wnt/beta-catenin signaling pathway. The canonical Wnt/beta-catenin signaling pathway leads to the activation of disheveled proteins, inhibition of GSK-3 kinase, nuclear accumulation of beta-catenin and activation of Wnt target genes. A second signaling pathway involving PKC and calcium fluxes has been seen for some family members, but it is not yet clear if it represents a distinct pathway or if it can be integrated in the canonical pathway, as PKC seems to be required for Wnt-mediated inactivation of GSK-3 kinase. Both pathways seem to involve interactions with G-proteins. May be involved in transduction and intercellular transmission of polarity information during tissue morphogenesis and/or in differentiated tissues. This Mus musculus (Mouse) protein is Frizzled-1 (Fzd1).